The chain runs to 141 residues: ATP synthase epsilon chain (141 aa).

The protein belongs to the ATPase epsilon chain family. As to quaternary structure, F-type ATPases have 2 components, CF(1) - the catalytic core - and CF(0) - the membrane proton channel. CF(1) has five subunits: alpha(3), beta(3), gamma(1), delta(1), epsilon(1). CF(0) has three main subunits: a, b and c.

It localises to the cell inner membrane. Its function is as follows. Produces ATP from ADP in the presence of a proton gradient across the membrane. The chain is ATP synthase epsilon chain from Paraburkholderia phymatum (strain DSM 17167 / CIP 108236 / LMG 21445 / STM815) (Burkholderia phymatum).